The sequence spans 989 residues: SWI/SNF-related matrix-associated actin-dependent regulator of chromatin subfamily A containing DEAD/H box 1 homolog (989 aa).

The disordered stretch occupies residues M1–N288. Residues D72–E105 are compositionally biased toward acidic residues. Basic residues predominate over residues R109–V120. Positions E124 to R140 are enriched in basic and acidic residues. Positions D187–I200 are enriched in acidic residues. Basic and acidic residues-rich tracts occupy residues S201–S221 and A241–E250. The span at S251–I276 shows a compositional bias: acidic residues. The segment covering E277–N288 has biased composition (basic and acidic residues). Positions I406–K574 constitute a Helicase ATP-binding domain. An ATP-binding site is contributed by D419–T426. The DEGH box motif lies at D525–H528. The Helicase C-terminal domain maps to Q757–A912. A disordered region spans residues R941–A989. Over residues G950–E982 the composition is skewed to basic and acidic residues.

Belongs to the SNF2/RAD54 helicase family.

The protein localises to the nucleus. The protein resides in the chromosome. The catalysed reaction is ATP + H2O = ADP + phosphate + H(+). Functionally, DNA helicase that possesses intrinsic ATP-dependent nucleosome-remodeling activity and is both required for DNA repair and heterochromatin organization. Promotes DNA end resection of double-strand breaks (DSBs) following DNA damage: probably acts by weakening histone DNA interactions in nucleosomes flanking DSBs. The chain is SWI/SNF-related matrix-associated actin-dependent regulator of chromatin subfamily A containing DEAD/H box 1 homolog from Caenorhabditis elegans.